Here is a 508-residue protein sequence, read N- to C-terminus: Probable cytosol aminopeptidase (508 aa).

Mn(2+) contacts are provided by Lys274 and Asp279. Lys286 is a catalytic residue. The Mn(2+) site is built by Asp297, Asp356, and Glu358. The active site involves Arg360.

Belongs to the peptidase M17 family. Requires Mn(2+) as cofactor.

The protein localises to the cytoplasm. It carries out the reaction Release of an N-terminal amino acid, Xaa-|-Yaa-, in which Xaa is preferably Leu, but may be other amino acids including Pro although not Arg or Lys, and Yaa may be Pro. Amino acid amides and methyl esters are also readily hydrolyzed, but rates on arylamides are exceedingly low.. The enzyme catalyses Release of an N-terminal amino acid, preferentially leucine, but not glutamic or aspartic acids.. Its function is as follows. Presumably involved in the processing and regular turnover of intracellular proteins. Catalyzes the removal of unsubstituted N-terminal amino acids from various peptides. This chain is Probable cytosol aminopeptidase, found in Paraburkholderia xenovorans (strain LB400).